The primary structure comprises 513 residues: Maturase K (513 aa).

The protein belongs to the intron maturase 2 family. MatK subfamily.

It is found in the plastid. The protein resides in the chloroplast. Its function is as follows. Usually encoded in the trnK tRNA gene intron. Probably assists in splicing its own and other chloroplast group II introns. In Phaseolus vulgaris (Kidney bean), this protein is Maturase K.